The primary structure comprises 230 residues: Uracil-DNA glycosylase (230 aa).

Asp70 acts as the Proton acceptor in catalysis.

Belongs to the uracil-DNA glycosylase (UDG) superfamily. UNG family.

It is found in the cytoplasm. The enzyme catalyses Hydrolyzes single-stranded DNA or mismatched double-stranded DNA and polynucleotides, releasing free uracil.. Functionally, excises uracil residues from the DNA which can arise as a result of misincorporation of dUMP residues by DNA polymerase or due to deamination of cytosine. The sequence is that of Uracil-DNA glycosylase from Pseudomonas putida (strain ATCC 700007 / DSM 6899 / JCM 31910 / BCRC 17059 / LMG 24140 / F1).